A 480-amino-acid polypeptide reads, in one-letter code: Aromatic-L-amino-acid decarboxylase (480 aa).

M1 carries the N-acetylmethionine modification. 2 consecutive repeat copies span residues 58-115 and 118-178. The segment at 58-178 is 2 X approximate tandem repeats; sequence KDIEKIIMPG…AASPEFTQAA (121 aa). Substrate is bound at residue T82. Pyridoxal 5'-phosphate-binding residues include A148 and S149. Residue H192 coordinates substrate. Pyridoxal 5'-phosphate is bound by residues T246 and N300. An N6-(pyridoxal phosphate)lysine modification is found at K303.

The protein belongs to the group II decarboxylase family. As to quaternary structure, homodimer. Pyridoxal 5'-phosphate serves as cofactor.

It carries out the reaction L-dopa + H(+) = dopamine + CO2. The enzyme catalyses 5-hydroxy-L-tryptophan + H(+) = serotonin + CO2. It functions in the pathway catecholamine biosynthesis; dopamine biosynthesis; dopamine from L-tyrosine: step 2/2. In terms of biological role, catalyzes the decarboxylation of L-3,4-dihydroxyphenylalanine (DOPA) to dopamine and L-5-hydroxytryptophan to serotonin. In Mus musculus (Mouse), this protein is Aromatic-L-amino-acid decarboxylase (Ddc).